Here is a 446-residue protein sequence, read N- to C-terminus: Na(+)-translocating NADH-quinone reductase subunit A (446 aa).

It belongs to the NqrA family. As to quaternary structure, composed of six subunits; NqrA, NqrB, NqrC, NqrD, NqrE and NqrF.

It catalyses the reaction a ubiquinone + n Na(+)(in) + NADH + H(+) = a ubiquinol + n Na(+)(out) + NAD(+). In terms of biological role, NQR complex catalyzes the reduction of ubiquinone-1 to ubiquinol by two successive reactions, coupled with the transport of Na(+) ions from the cytoplasm to the periplasm. NqrA to NqrE are probably involved in the second step, the conversion of ubisemiquinone to ubiquinol. This chain is Na(+)-translocating NADH-quinone reductase subunit A, found in Vibrio parahaemolyticus serotype O3:K6 (strain RIMD 2210633).